Consider the following 324-residue polypeptide: Calmodulin-like protein 12 (324 aa).

6 EF-hand domains span residues 8-43 (DQIT…IGEK), 44-79 (PTKA…NQGH), 97-132 (DQIT…LGKN), 133-168 (RTKA…NQGH), 187-222 (DQIL…LGET), and 223-258 (QTKA…KMID). Aspartate 21, asparagine 23, aspartate 25, serine 27, glutamate 32, aspartate 57, aspartate 59, aspartate 61, threonine 63, glutamate 68, aspartate 110, asparagine 112, aspartate 114, serine 116, glutamate 121, aspartate 146, aspartate 148, aspartate 150, threonine 152, glutamate 157, aspartate 200, asparagine 202, aspartate 204, tyrosine 206, glutamate 211, aspartate 236, aspartate 238, aspartate 240, threonine 242, and glutamate 247 together coordinate Ca(2+).

The protein belongs to the calmodulin family. Interacts with PID. Binds to ABCG36.

Its function is as follows. Potential calcium sensor that binds calcium in vitro. In Arabidopsis thaliana (Mouse-ear cress), this protein is Calmodulin-like protein 12.